The following is a 136-amino-acid chain: Acyl-CoA thioesterase YbgC (136 aa).

Aspartate 18 is an active-site residue.

Belongs to the 4-hydroxybenzoyl-CoA thioesterase family.

Functionally, displays acyl-CoA thioesterase activity with short chain aliphatic acyl-CoA thioesters, such as propionyl-CoA and butyryl-CoA. Enzyme activity is relatively low, suggesting that the acyl-CoA thioesters used in the assays are not the physiological substrates. Has no detectable activity with 4-hydroxybenzoyl-CoA, lauroyl-CoA (C12:0), arachidoyl-CoA (C20:0) and arachidonoyl-CoA (C20:4). This Haemophilus influenzae (strain ATCC 51907 / DSM 11121 / KW20 / Rd) protein is Acyl-CoA thioesterase YbgC (ybgC).